Reading from the N-terminus, the 801-residue chain is Protein SDA1 homolog (801 aa).

Disordered regions lie at residues 1–40 (MGKVSKSPGKGEKRIGKVGKKNGKSNAPTEGSNSGKASRF), 495–517 (RKDRGKPQEKDDEDEEYNGFARP), 536–647 (GEQG…SKNS), and 739–801 (DYKF…RKPQ). Positions 24–40 (KSNAPTEGSNSGKASRF) are enriched in polar residues. Composition is skewed to acidic residues over residues 544–568 (DGTDSELDVSDVDTDDVDTDDDADE) and 583–633 (NDAE…EASE). Basic residues-rich tracts occupy residues 770 to 779 (NKIRGRNRQR) and 787 to 801 (SLRHYLMRQSGRKPQ).

The protein belongs to the SDA1 family.

It is found in the nucleus. Its function is as follows. Required for 60S pre-ribosomal subunits export to the cytoplasm. Required for normal somatic gonad development and for regulation of germline development and proliferation. This is Protein SDA1 homolog (pro-3) from Caenorhabditis elegans.